The chain runs to 324 residues: Beta-ketoacyl-[acyl-carrier-protein] synthase III (324 aa).

Residues Cys114 and His251 contribute to the active site. Positions 252 to 256 are ACP-binding; that stretch reads QANLR. The active site involves Asn281.

It belongs to the thiolase-like superfamily. FabH family. In terms of assembly, homodimer.

The protein resides in the cytoplasm. The enzyme catalyses malonyl-[ACP] + acetyl-CoA + H(+) = 3-oxobutanoyl-[ACP] + CO2 + CoA. It functions in the pathway lipid metabolism; fatty acid biosynthesis. Catalyzes the condensation reaction of fatty acid synthesis by the addition to an acyl acceptor of two carbons from malonyl-ACP. Catalyzes the first condensation reaction which initiates fatty acid synthesis and may therefore play a role in governing the total rate of fatty acid production. Possesses both acetoacetyl-ACP synthase and acetyl transacylase activities. Its substrate specificity determines the biosynthesis of branched-chain and/or straight-chain of fatty acids. The sequence is that of Beta-ketoacyl-[acyl-carrier-protein] synthase III from Rhodobacter capsulatus (Rhodopseudomonas capsulata).